Here is a 420-residue protein sequence, read N- to C-terminus: L-rhamnose isomerase (420 aa).

Mn(2+)-binding residues include His264, Asp296, and Asp298.

Belongs to the rhamnose isomerase family. The cofactor is Mn(2+).

It localises to the cytoplasm. It catalyses the reaction L-rhamnopyranose = L-rhamnulose. Its pathway is carbohydrate degradation; L-rhamnose degradation; glycerone phosphate from L-rhamnose: step 1/3. In terms of biological role, catalyzes the interconversion of L-rhamnose and L-rhamnulose. The sequence is that of L-rhamnose isomerase from Listeria monocytogenes serovar 1/2a (strain ATCC BAA-679 / EGD-e).